The following is a 490-amino-acid chain: Betaine aldehyde dehydrogenase (490 aa).

Residues Thr-26, Ile-27, and Asp-93 each coordinate K(+). 150-152 (GAW) is an NAD(+) binding site. The active-site Charge relay system is Lys-162. Residue 176–179 (KPSE) coordinates NAD(+). Val-180 lines the K(+) pocket. 230–233 (GVAS) is a binding site for NAD(+). Residue Leu-246 participates in K(+) binding. The active-site Proton acceptor is Glu-252. NAD(+) contacts are provided by Gly-254, Cys-286, and Glu-387. Catalysis depends on Cys-286, which acts as the Nucleophile. Cys-286 carries the post-translational modification Cysteine sulfenic acid (-SOH). K(+) is bound by residues Lys-457 and Gly-460. Catalysis depends on Glu-464, which acts as the Charge relay system.

Belongs to the aldehyde dehydrogenase family. Dimer of dimers. The cofactor is K(+).

It catalyses the reaction betaine aldehyde + NAD(+) + H2O = glycine betaine + NADH + 2 H(+). It functions in the pathway amine and polyamine biosynthesis; betaine biosynthesis via choline pathway; betaine from betaine aldehyde: step 1/1. In terms of biological role, involved in the biosynthesis of the osmoprotectant glycine betaine. Catalyzes the irreversible oxidation of betaine aldehyde to the corresponding acid. In Escherichia coli O45:K1 (strain S88 / ExPEC), this protein is Betaine aldehyde dehydrogenase.